We begin with the raw amino-acid sequence, 351 residues long: Histidinol-phosphate aminotransferase 1 (351 aa).

K210 carries the post-translational modification N6-(pyridoxal phosphate)lysine.

The protein belongs to the class-II pyridoxal-phosphate-dependent aminotransferase family. Histidinol-phosphate aminotransferase subfamily. In terms of assembly, homodimer. Pyridoxal 5'-phosphate is required as a cofactor.

It carries out the reaction L-histidinol phosphate + 2-oxoglutarate = 3-(imidazol-4-yl)-2-oxopropyl phosphate + L-glutamate. The protein operates within amino-acid biosynthesis; L-histidine biosynthesis; L-histidine from 5-phospho-alpha-D-ribose 1-diphosphate: step 7/9. This is Histidinol-phosphate aminotransferase 1 (hisC1) from Pseudomonas aeruginosa (strain ATCC 15692 / DSM 22644 / CIP 104116 / JCM 14847 / LMG 12228 / 1C / PRS 101 / PAO1).